The primary structure comprises 313 residues: ADP-L-glycero-D-manno-heptose-6-epimerase (313 aa).

NADP(+) contacts are provided by residues 10-11 (MI), 31-32 (DN), K38, R53, 75-79 (EGACS), and N92. Y139 (proton acceptor) is an active-site residue. K143 is a binding site for NADP(+). A substrate-binding site is contributed by N174. Residues V175 and K183 each coordinate NADP(+). Residue K183 is the Proton acceptor of the active site. Residues S185, H192, 206 to 209 (FEGS), R214, and Y277 each bind substrate.

This sequence belongs to the NAD(P)-dependent epimerase/dehydratase family. HldD subfamily. As to quaternary structure, homopentamer. Requires NADP(+) as cofactor.

It carries out the reaction ADP-D-glycero-beta-D-manno-heptose = ADP-L-glycero-beta-D-manno-heptose. Its pathway is nucleotide-sugar biosynthesis; ADP-L-glycero-beta-D-manno-heptose biosynthesis; ADP-L-glycero-beta-D-manno-heptose from D-glycero-beta-D-manno-heptose 7-phosphate: step 4/4. It functions in the pathway bacterial outer membrane biogenesis; LPS core biosynthesis. Its function is as follows. Catalyzes the interconversion between ADP-D-glycero-beta-D-manno-heptose and ADP-L-glycero-beta-D-manno-heptose via an epimerization at carbon 6 of the heptose. This Vibrio parahaemolyticus serotype O3:K6 (strain RIMD 2210633) protein is ADP-L-glycero-D-manno-heptose-6-epimerase.